The chain runs to 146 residues: MNRLLRLRFKLKMKKPDFIRQEAHRHKRLGEKWRRPKGRHSKMRLKWKEKPPVVEIGYRSPKAVRGLHPSGLEDVLVYNVKDLEKLNPETQGARIASTVGKRKKIEIIIRARELGIRILNISEEKQEELLKLAEKQEAQEVNETNE.

This sequence belongs to the eukaryotic ribosomal protein eL32 family.

The sequence is that of Large ribosomal subunit protein eL32 (rpl32e) from Methanocaldococcus jannaschii (strain ATCC 43067 / DSM 2661 / JAL-1 / JCM 10045 / NBRC 100440) (Methanococcus jannaschii).